Consider the following 326-residue polypeptide: Protein FAM50 homolog (326 aa).

The disordered stretch occupies residues 77–111; that stretch reads ISNRDLQVARGDQSSSTQSKDSQEAREKEEHVAKH. Residues 97–109 are compositionally biased toward basic and acidic residues; that stretch reads DSQEAREKEEHVA.

This sequence belongs to the FAM50 family.

The polypeptide is Protein FAM50 homolog (Caenorhabditis elegans).